Here is a 219-residue protein sequence, read N- to C-terminus: Transmembrane protein 179B (219 aa).

4 helical membrane passes run 9–29 (VELLLFTAAFLCGALAAATLT), 65–85 (FVAGASGILALYCLLLLFFWV), 98–118 (IGLRIALAISATAIFLILVSA), and 162–182 (LHTAETSSWVNLILWCLALLL). S206 is subject to Phosphoserine.

It belongs to the TMEM179 family.

The protein localises to the membrane. The chain is Transmembrane protein 179B (Tmem179b) from Mus musculus (Mouse).